A 227-amino-acid polypeptide reads, in one-letter code: Cytochrome c oxidase subunit 2 (227 aa).

Topologically, residues Met-1–Ser-14 are mitochondrial intermembrane. Residues Pro-15 to Met-45 form a helical membrane-spanning segment. Over Leu-46 to Gln-59 the chain is Mitochondrial matrix. Residues Glu-60–Met-87 form a helical membrane-spanning segment. The Mitochondrial intermembrane segment spans residues Asp-88 to Ile-227. 6 residues coordinate Cu cation: His-161, Cys-196, Glu-198, Cys-200, His-204, and Met-207. Glu-198 is a binding site for Mg(2+). Tyr-218 carries the phosphotyrosine modification.

It belongs to the cytochrome c oxidase subunit 2 family. In terms of assembly, component of the cytochrome c oxidase (complex IV, CIV), a multisubunit enzyme composed of 14 subunits. The complex is composed of a catalytic core of 3 subunits MT-CO1, MT-CO2 and MT-CO3, encoded in the mitochondrial DNA, and 11 supernumerary subunits COX4I, COX5A, COX5B, COX6A, COX6B, COX6C, COX7A, COX7B, COX7C, COX8 and NDUFA4, which are encoded in the nuclear genome. The complex exists as a monomer or a dimer and forms supercomplexes (SCs) in the inner mitochondrial membrane with NADH-ubiquinone oxidoreductase (complex I, CI) and ubiquinol-cytochrome c oxidoreductase (cytochrome b-c1 complex, complex III, CIII), resulting in different assemblies (supercomplex SCI(1)III(2)IV(1) and megacomplex MCI(2)III(2)IV(2)). Found in a complex with TMEM177, COA6, COX18, COX20, SCO1 and SCO2. Interacts with TMEM177 in a COX20-dependent manner. Interacts with COX20. Interacts with COX16. Requires Cu cation as cofactor.

It is found in the mitochondrion inner membrane. It catalyses the reaction 4 Fe(II)-[cytochrome c] + O2 + 8 H(+)(in) = 4 Fe(III)-[cytochrome c] + 2 H2O + 4 H(+)(out). In terms of biological role, component of the cytochrome c oxidase, the last enzyme in the mitochondrial electron transport chain which drives oxidative phosphorylation. The respiratory chain contains 3 multisubunit complexes succinate dehydrogenase (complex II, CII), ubiquinol-cytochrome c oxidoreductase (cytochrome b-c1 complex, complex III, CIII) and cytochrome c oxidase (complex IV, CIV), that cooperate to transfer electrons derived from NADH and succinate to molecular oxygen, creating an electrochemical gradient over the inner membrane that drives transmembrane transport and the ATP synthase. Cytochrome c oxidase is the component of the respiratory chain that catalyzes the reduction of oxygen to water. Electrons originating from reduced cytochrome c in the intermembrane space (IMS) are transferred via the dinuclear copper A center (CU(A)) of subunit 2 and heme A of subunit 1 to the active site in subunit 1, a binuclear center (BNC) formed by heme A3 and copper B (CU(B)). The BNC reduces molecular oxygen to 2 water molecules using 4 electrons from cytochrome c in the IMS and 4 protons from the mitochondrial matrix. In Arvicanthis somalicus (Neumann's grass rat), this protein is Cytochrome c oxidase subunit 2 (MT-CO2).